We begin with the raw amino-acid sequence, 391 residues long: MDFGALPPEINSARMYAGAGAGPMMAAGAAWNGLAAELGTTAASYESVITRLTTESWMGPASMAMVAAAQPYLAWLTYTAEAAAHAGSQAMASAAAYEAAYAMTVPPEVVAANRALLAALVATNVLGINTPAIMATEALYAEMWAQDALAMYGYAAASGAAGMLQPLSPPSQTTNPGGLAAQSAAVGSAAATAAVNQVSVADLISSLPNAVSGLASPVTSVLDSTGLSGIIADIDALLATPFVANIINSAVNTAAWYVNAAIPTAIFLANALNSGAPVAIAEGAIEAAEGAASAAAAGLADSVTPAGLGASLGEATLVGRLSVPAAWSTAAPATTAGATALEGSGWTVAAEEAGPVTGMMPGMASAAKGTGAYAGPRYGFKPTVMPKQVVV.

Residues 312 to 367 form a eukaryotic-like SH3 domain region; that stretch reads LGEATLVGRLSVPAAWSTAAPATTAGATALEGSGWTVAAEEAGPVTGMMPGMASAA.

It belongs to the mycobacterial PPE family. As to quaternary structure, forms a heterodimer with PE8. The dimer forms a 1:1:1 heterotrimeric complex with EspG5. PPE15 interacts directly with EspG5. Interacts via the C-terminal region with host Toll-like receptor 4 (TLR4). Interacts, also via the C-terminal region, with two cytosolic subunits of the host NOX complex, p47phox (NCF1) and p67phox (NCF2).

The protein localises to the secreted. It is found in the host mitochondrion. In terms of biological role, may play a critical role in the homeostasis of triacylglycerol-containing lipid droplets in M.tuberculosis and influence the entry of the pathogen into a dormant state. Is recognized by host TLR4 receptor at the macrophage cell surface, which modulates the host immune response, induces mitochondrial stress and perturbations, and induces macrophage apoptosis leading to pathogen persistence. Also downregulates NOX-mediated reactive oxygen species (ROS) generation in THP1 macrophages, which increases intracellular survival of bacteria. PPE15 interacts with two subunits of the host NADPH oxidase (NOX) complex in the cytosol of macrophages and prevents their migration to the membrane, which inhibits the assembly of the NOX complex at the plasma membrane of THP1 macrophages. This leads to reduced NOX activity and diminished ROS generation. The polypeptide is PPE family protein PPE15 (PPE15) (Mycobacterium tuberculosis (strain CDC 1551 / Oshkosh)).